The following is a 135-amino-acid chain: Small ribosomal subunit protein eS6 (135 aa).

The protein belongs to the eukaryotic ribosomal protein eS6 family.

In Halorubrum lacusprofundi (strain ATCC 49239 / DSM 5036 / JCM 8891 / ACAM 34), this protein is Small ribosomal subunit protein eS6.